The sequence spans 583 residues: Isocitrate dehydrogenase kinase/phosphatase (583 aa).

ATP-binding positions include 315–321 (APGIRGM) and Lys336. Asp371 is a catalytic residue.

This sequence belongs to the AceK family.

The protein resides in the cytoplasm. It catalyses the reaction L-seryl-[isocitrate dehydrogenase] + ATP = O-phospho-L-seryl-[isocitrate dehydrogenase] + ADP + H(+). Bifunctional enzyme which can phosphorylate or dephosphorylate isocitrate dehydrogenase (IDH) on a specific serine residue. This is a regulatory mechanism which enables bacteria to bypass the Krebs cycle via the glyoxylate shunt in response to the source of carbon. When bacteria are grown on glucose, IDH is fully active and unphosphorylated, but when grown on acetate or ethanol, the activity of IDH declines drastically concomitant with its phosphorylation. The chain is Isocitrate dehydrogenase kinase/phosphatase from Salmonella enteritidis PT4 (strain P125109).